The primary structure comprises 276 residues: Neuroendocrine protein 7B2 (276 aa).

Cys155 and Cys168 are disulfide-bonded.

This sequence belongs to the 7B2 family. In terms of assembly, interacts with amon/PC2 early in the secretory pathway. Dissociation occurs at later stages.

It is found in the secreted. Its function is as follows. Acts as a molecular chaperone for neuroendocrine convertase amon/PC2, preventing its premature activation in the regulated secretory pathway. Binds to inactive amon in the endoplasmic reticulum and facilitates its transport from there to later compartments of the secretory pathway where it is proteolytically matured and activated. Also required for cleavage of amon. This is Neuroendocrine protein 7B2 from Drosophila melanogaster (Fruit fly).